The sequence spans 100 residues: UPF0213 protein YhbQ (100 aa).

Residues 2-77 (TPWFLYLIRT…KQLTKRQKER (76 aa)) form the GIY-YIG domain.

Belongs to the UPF0213 family.

The protein is UPF0213 protein YhbQ of Escherichia coli O7:K1 (strain IAI39 / ExPEC).